Here is a 51-residue protein sequence, read N- to C-terminus: Large ribosomal subunit protein eL39 (51 aa).

Belongs to the eukaryotic ribosomal protein eL39 family.

This chain is Large ribosomal subunit protein eL39 (RpL39), found in Plutella xylostella (Diamondback moth).